The primary structure comprises 350 residues: S-adenosylmethionine:tRNA ribosyltransferase-isomerase (350 aa).

The protein belongs to the QueA family. In terms of assembly, monomer.

The protein localises to the cytoplasm. It catalyses the reaction 7-aminomethyl-7-carbaguanosine(34) in tRNA + S-adenosyl-L-methionine = epoxyqueuosine(34) in tRNA + adenine + L-methionine + 2 H(+). Its pathway is tRNA modification; tRNA-queuosine biosynthesis. Its function is as follows. Transfers and isomerizes the ribose moiety from AdoMet to the 7-aminomethyl group of 7-deazaguanine (preQ1-tRNA) to give epoxyqueuosine (oQ-tRNA). This chain is S-adenosylmethionine:tRNA ribosyltransferase-isomerase, found in Aliivibrio salmonicida (strain LFI1238) (Vibrio salmonicida (strain LFI1238)).